Consider the following 566-residue polypeptide: KsdD-like steroid dehydrogenase MT0809 (566 aa).

FAD is bound at residue 23-54 (DAIVVGAGLAGLVAACELADRGLRVLILDQEN).

This sequence belongs to the FAD-dependent oxidoreductase 2 family. The cofactor is FAD.

Its pathway is lipid metabolism; steroid biosynthesis. In terms of biological role, able to catalyze the elimination of the C-1 and C-2 hydrogen atoms of the A-ring from the polycyclic ring structure of 3-ketosteroids. The sequence is that of KsdD-like steroid dehydrogenase MT0809 from Mycobacterium tuberculosis (strain CDC 1551 / Oshkosh).